The chain runs to 148 residues: UPF0178 protein lpg0089 (148 aa).

This sequence belongs to the UPF0178 family.

This chain is UPF0178 protein lpg0089, found in Legionella pneumophila subsp. pneumophila (strain Philadelphia 1 / ATCC 33152 / DSM 7513).